The chain runs to 343 residues: Large ribosomal subunit protein uL3 (343 aa).

Disordered stretches follow at residues 1–31 (MGHRKLASPRRGSAGVRPRKRASEILPTPRS) and 238–262 (KGSRKVGARGPSFSTPSYVPQPGQM).

Belongs to the universal ribosomal protein uL3 family. Part of the 50S ribosomal subunit. Forms a cluster with proteins L14 and L24e.

Functionally, one of the primary rRNA binding proteins, it binds directly near the 3'-end of the 23S rRNA, where it nucleates assembly of the 50S subunit. The polypeptide is Large ribosomal subunit protein uL3 (Sulfurisphaera tokodaii (strain DSM 16993 / JCM 10545 / NBRC 100140 / 7) (Sulfolobus tokodaii)).